Reading from the N-terminus, the 267-residue chain is Methylglyoxal reductase DkgB (267 aa).

Tyr39 functions as the Proton donor in the catalytic mechanism. His97 contributes to the substrate binding site. NADP(+) is bound at residue 179-231 (MTLAYGKALKDEVIARIAVKHNATPVQVILAWAMGEGYSVIPSSTRRENLASN).

Belongs to the aldo/keto reductase family. As to quaternary structure, monomer.

The protein resides in the cytoplasm. It carries out the reaction hydroxyacetone + NADP(+) = methylglyoxal + NADPH + H(+). Its function is as follows. Aldo-keto reductase that significantly contributes to cellular methylglyoxal detoxification by catalyzing the NADPH-dependent conversion of methylglyoxal to acetol. In Salmonella typhi, this protein is Methylglyoxal reductase DkgB.